We begin with the raw amino-acid sequence, 256 residues long: uncharacterized protein (256 aa).

The N-terminal stretch at Met1–Gly24 is a signal peptide. Cys25 is lipidated: N-palmitoyl cysteine. A lipid anchor (S-diacylglycerol cysteine) is attached at Cys25.

This sequence belongs to the staphylococcal tandem lipoprotein family.

The protein localises to the cell membrane. This is an uncharacterized protein from Staphylococcus aureus (strain NCTC 8325 / PS 47).